We begin with the raw amino-acid sequence, 416 residues long: MSVANEESYRPSKATDATTEAVPPPMSYPQLFARFLKFGLLAWGGPVAQIDMLRRELVDEERWISSKRFNKLLAVMQVLPGPEAHEICVHLGIRAKGRLGGVLAGLGFMLPGFLLMFALSWLYFQIEFVGTALGAAFLGVQAAVIALIVRAVHRIGEHILLDRWLWVIAIVCALAAIGRVDFWITLPAGGLVYALLVLNHRASALLVTLAAVALAAAVALWAAPTAKLVEAVVQGQASVLLIFASGLKAGLLTFGGAYTAIPFVRNDAVGRGWMTDGQFLDGLALSGVLPAPLIIFATFVGYVAGGPIGAVAMTVGVFLPAFAFSLIFYDRLEAVVENKRLHAFLDGVAAGVVGLIGATTIDLAQVTAERVPSLTVGMSIFAAGLAFLYAWKNKLNVVVVILAAGLAGWLVFPNQG.

The segment at 1–21 is disordered; that stretch reads MSVANEESYRPSKATDATTEA. A run of 11 helical transmembrane segments spans residues 99–119, 128–148, 160–177, 181–198, 204–224, 237–257, 283–303, 308–328, 341–361, 371–391, and 395–415; these read LGGVLAGLGFMLPGFLLMFAL, FVGTALGAAFLGVQAAVIALI, LLDRWLWVIAIVCALAAI, DFWITLPAGGLVYALLVL, ALLVTLAAVALAAAVALWAAP, ASVLLIFASGLKAGLLTFGGA, LALSGVLPAPLIIFATFVGYV, IGAVAMTVGVFLPAFAFSLIF, LHAFLDGVAAGVVGLIGATTI, VPSLTVGMSIFAAGLAFLYAW, and LNVVVVILAAGLAGWLVFPNQ.

The protein belongs to the chromate ion transporter (CHR) (TC 2.A.51) family.

Its subcellular location is the cell inner membrane. Functionally, this protein reduces chromate accumulation and is essential for chromate resistance. This is Chromate transport protein from Pseudomonas aeruginosa.